The following is a 571-amino-acid chain: Protein E6 homolog (571 aa).

Belongs to the chordopoxvirinae E6 family.

The protein resides in the virion. In terms of biological role, late protein which may play a role in the virion morphogenesis and have therefore an indirect role on viral transcription ability. This chain is Protein E6 homolog, found in Vertebrata (FPV).